We begin with the raw amino-acid sequence, 204 residues long: uncharacterized protein (204 aa).

A helical transmembrane segment spans residues 63-83 (SLLLSMVASVTAAGGNAAIVG).

Its subcellular location is the membrane. This is an uncharacterized protein from Mycobacterium tuberculosis (strain ATCC 25618 / H37Rv).